Consider the following 301-residue polypeptide: MKIAVLSRNPRLYSTRRLVEAGQQRGHEMQVIDTLRAYMNIASHKPQIHYRGRALEGFDAVIPRIGASVTFYGCAVLRQFEMMGVYPLNESVAISRSRDKLRALQLLSRKGIGLPVTGFAHSPDDIPDLIQMVGGAPLVIKVLEGTQGMGVVLAETTKAAESVIEAFFGLKQDIMVQEYIQEAGGADIRCFVVGDKVIASMKRQAKAGEFRSNLHRGGSASLIKITPEERMTAVRAAKVMGLNVAGVDILRSNHGPLVMEVNSSPGLEGIETTTGKDVAGMIIQYLEKNAEPGQTRTKGRG.

The ATP-grasp domain maps to 104 to 287 (LQLLSRKGIG…VAGMIIQYLE (184 aa)). ATP-binding positions include Lys-141, 178–179 (EY), Asp-187, and 211–213 (RSN). Mg(2+) is bound by residues Asp-248, Glu-260, and Asn-262. Mn(2+) contacts are provided by Asp-248, Glu-260, and Asn-262.

The protein belongs to the RimK family. Mg(2+) serves as cofactor. It depends on Mn(2+) as a cofactor.

The polypeptide is Probable alpha-L-glutamate ligase (Ectopseudomonas mendocina (strain ymp) (Pseudomonas mendocina)).